Reading from the N-terminus, the 360-residue chain is Phospho-N-acetylmuramoyl-pentapeptide-transferase (360 aa).

11 consecutive transmembrane segments (helical) span residues 2 to 22, 26 to 46, 73 to 93, 97 to 117, 134 to 154, 168 to 188, 199 to 219, 236 to 256, 263 to 283, 288 to 308, and 339 to 359; these read LVWV…FQYL, AILG…VMIR, TMGG…WADL, YVLI…VDDW, YFWQ…TAHL, ITLA…VGGS, GLAI…AYLS, TGEL…FLWF, VFMG…VAVI, LVFF…ILQV, and IVRF…TLKI.

This sequence belongs to the glycosyltransferase 4 family. MraY subfamily. Mg(2+) serves as cofactor.

It is found in the cell inner membrane. It catalyses the reaction UDP-N-acetyl-alpha-D-muramoyl-L-alanyl-gamma-D-glutamyl-meso-2,6-diaminopimeloyl-D-alanyl-D-alanine + di-trans,octa-cis-undecaprenyl phosphate = di-trans,octa-cis-undecaprenyl diphospho-N-acetyl-alpha-D-muramoyl-L-alanyl-D-glutamyl-meso-2,6-diaminopimeloyl-D-alanyl-D-alanine + UMP. It participates in cell wall biogenesis; peptidoglycan biosynthesis. In terms of biological role, catalyzes the initial step of the lipid cycle reactions in the biosynthesis of the cell wall peptidoglycan: transfers peptidoglycan precursor phospho-MurNAc-pentapeptide from UDP-MurNAc-pentapeptide onto the lipid carrier undecaprenyl phosphate, yielding undecaprenyl-pyrophosphoryl-MurNAc-pentapeptide, known as lipid I. The protein is Phospho-N-acetylmuramoyl-pentapeptide-transferase of Hahella chejuensis (strain KCTC 2396).